A 352-amino-acid polypeptide reads, in one-letter code: Quinolinate synthase (352 aa).

Iminosuccinate contacts are provided by His-48 and Ser-69. Cys-114 lines the [4Fe-4S] cluster pocket. Residues Tyr-140–Asn-142 and Ser-157 each bind iminosuccinate. Cys-201 provides a ligand contact to [4Fe-4S] cluster. Iminosuccinate-binding positions include His-227 to Glu-229 and Thr-244. Cys-298 serves as a coordination point for [4Fe-4S] cluster.

The protein belongs to the quinolinate synthase family. Type 1 subfamily. Requires [4Fe-4S] cluster as cofactor.

The protein resides in the cytoplasm. It carries out the reaction iminosuccinate + dihydroxyacetone phosphate = quinolinate + phosphate + 2 H2O + H(+). It participates in cofactor biosynthesis; NAD(+) biosynthesis; quinolinate from iminoaspartate: step 1/1. Functionally, catalyzes the condensation of iminoaspartate with dihydroxyacetone phosphate to form quinolinate. This is Quinolinate synthase from Pseudomonas aeruginosa (strain UCBPP-PA14).